The sequence spans 430 residues: MGKNVVVLGTQWGDEGKGKIVDLLTEHAAAVVRYQGGHNAGHTLVINGEKTVLHLIPSGILREGVQCLIGNGVVVAPDALMREITKLEEKGVPVRERLRISPAAPLILSYHVALDQAREKARGEAKIGTTGRGIGPAYEDKVARRGLRVGDLFHRERFAAKLGELLDYHNFQLVNYYKEPAIDFQQTLDECMAYAEQLKPMMLDVTAELHNLRRAGKDIMFEGAQGSLLDIDHGTYPYVTSSNTTAGGISTGSGVGPMYLDYILGITKAYTTRVGSGPFPTELFDETGATLAKRGHEFGSTTGRARRCGWFDAVILRRAIDVNSISGICLTKLDVLDGLETINICVGYKNENGAVIDAPSDADSYIGLEPVYEQMPGWSESTLGVKTLEELPEAARAYIKRIEELVGAPIDIISTGPDRNETIVLRHPFA.

GTP contacts are provided by residues 13 to 19 (GDEGKGK) and 41 to 43 (GHT). Asp14 acts as the Proton acceptor in catalysis. Residues Asp14 and Gly41 each coordinate Mg(2+). IMP-binding positions include 14–17 (DEGK), 39–42 (NAGH), Thr130, Arg144, Gln225, Thr240, and Arg304. The active-site Proton donor is His42. 300 to 306 (STTGRAR) contributes to the substrate binding site. GTP contacts are provided by residues Arg306, 332–334 (KLD), and 414–416 (STG).

It belongs to the adenylosuccinate synthetase family. As to quaternary structure, homodimer. It depends on Mg(2+) as a cofactor.

The protein localises to the cytoplasm. The enzyme catalyses IMP + L-aspartate + GTP = N(6)-(1,2-dicarboxyethyl)-AMP + GDP + phosphate + 2 H(+). The protein operates within purine metabolism; AMP biosynthesis via de novo pathway; AMP from IMP: step 1/2. Functionally, plays an important role in the de novo pathway of purine nucleotide biosynthesis. Catalyzes the first committed step in the biosynthesis of AMP from IMP. This is Adenylosuccinate synthetase from Pseudomonas entomophila (strain L48).